The primary structure comprises 921 residues: Ribosome-releasing factor 2, mitochondrial (921 aa).

The N-terminal 55 residues, 1-55, are a transit peptide targeting the mitochondrion; that stretch reads MVSALLLRARQNGRAARCLDYPKVKCWALASLPKSSLEKPGFSQVRRFSVFHPQS. The tr-type G domain occupies 60–368; that stretch reads DLTRNIGIIA…SVVDLLPSPQ (309 aa). GTP-binding positions include 69 to 76, 152 to 156, and 206 to 209; these read AHIDAGKT, DTPGH, and NKMD.

This sequence belongs to the TRAFAC class translation factor GTPase superfamily. Classic translation factor GTPase family. EF-G/EF-2 subfamily.

It localises to the mitochondrion. Its function is as follows. Mitochondrial GTPase that mediates the disassembly of ribosomes from messenger RNA at the termination of mitochondrial protein biosynthesis. Not involved in the GTP-dependent ribosomal translocation step during translation elongation. This Emericella nidulans (strain FGSC A4 / ATCC 38163 / CBS 112.46 / NRRL 194 / M139) (Aspergillus nidulans) protein is Ribosome-releasing factor 2, mitochondrial (mef2).